The primary structure comprises 184 residues: dCTP deaminase (184 aa).

DCTP-binding positions include 107-112 (KSTYAR), 131-133 (TLE), Gln152, Tyr166, and Gln176. Glu133 (proton donor/acceptor) is an active-site residue.

The protein belongs to the dCTP deaminase family. In terms of assembly, homotrimer.

The catalysed reaction is dCTP + H2O + H(+) = dUTP + NH4(+). It participates in pyrimidine metabolism; dUMP biosynthesis; dUMP from dCTP (dUTP route): step 1/2. Functionally, catalyzes the deamination of dCTP to dUTP. This chain is dCTP deaminase, found in Rhodospirillum centenum (strain ATCC 51521 / SW).